We begin with the raw amino-acid sequence, 3291 residues long: Protocadherin-16 (3291 aa).

The signal sequence occupies residues 1–35 (MQKELSVALSCPGMKSLRTLLPLLVLLGATVPGSW). Residues 36 to 2933 (GQAGSLDLQI…PDLNLLLVGA (2898 aa)) lie on the Extracellular side of the membrane. Cadherin domains lie at 37–137 (QAGS…APAF), 138–249 (PQAR…APAF), 250–356 (NQSR…QPSM), 369–466 (VSEA…APAF), 476–572 (LPEV…EPQF), 573–679 (QRTF…PPQF), 680–784 (YPRE…PPIF), 785–888 (EQLQ…SPAF), 889–994 (PAPE…APRF), 995–1105 (DSPT…EPTF), 1100–1205 (SEEP…SPTF), 1218–1317 (IQVP…SPDL), 1326–1429 (VPVV…APTF), 1430–1539 (ARDP…APVF), 1539–1642 (FASP…APAF), 1643–1744 (PQQE…TPTF), 1745–1848 (GNTH…APVF), 1849–1953 (PVPS…APAF), 1976–2061 (LATL…GPRF), 2062–2164 (PRTS…APRF), 2165–2270 (LRPH…RPTI), 2270–2369 (IPQP…VPTF), 2370–2475 (SQSL…APSF), 2476–2595 (TLPH…PPVF), 2596–2699 (TRAS…GPAF), 2700–2806 (PLSL…DPVF), and 2807–2926 (LAPS…APDL). N-linked (GlcNAc...) asparagine glycosylation occurs at Asn-396. Residue Asn-2354 is glycosylated (N-linked (GlcNAc...) asparagine). The tract at residues 2867-2886 (SRAPGSGTTTSGGGGRTRRE) is disordered. The chain crosses the membrane as a helical span at residues 2934-2954 (VAASLGVVVVLALAALVLGLV). The Cytoplasmic portion of the chain corresponds to 2955–3291 (RARSRKAEAA…EPPDDTELRI (337 aa)). The tract at residues 2978 to 3033 (SLQKLGREPPSPPPSEHLYHQTLPSYGGPGAGGPYPRGGSLDPSHSSGRGSAEAAE) is disordered. A compositionally biased stretch (gly residues) spans 3004–3013 (GGPGAGGPYP). Ser-3048 is modified (phosphoserine). Disordered stretches follow at residues 3051 to 3081 (SSLAARGPDSGIQQDADGLSDTSCEPPAPDT) and 3226 to 3291 (ASHR…ELRI). Residues 3237-3259 (SLSSAAMSPSFSPSLSPLAARSP) are compositionally biased toward low complexity. The segment covering 3270–3279 (PSASALSTES) has biased composition (polar residues).

In terms of assembly, heterophilic interaction with FAT4; this interaction affects their respective protein levels. In terms of tissue distribution, expressed in the epicardium and atrioventricular sulcus (at protein level).

The protein localises to the cell membrane. In terms of biological role, calcium-dependent cell-adhesion protein. Mediates functions in neuroprogenitor cell proliferation and differentiation. In the heart, has a critical role for proper morphogenesis of the mitral valve, acting in the regulation of cell migration involved in valve formation. In Mus musculus (Mouse), this protein is Protocadherin-16 (Dchs1).